The primary structure comprises 165 residues: 16S rRNA aminocarboxypropyltransferase (165 aa).

The S-adenosyl-L-methionine site is built by Thr-17, Leu-62, Leu-83, and Thr-102.

This sequence belongs to the TDD superfamily. TSR3 family.

The protein resides in the cytoplasm. The catalysed reaction is an N(1)-methylpseudouridine in rRNA + S-adenosyl-L-methionine = N(1)-methyl-N(3)-[(3S)-3-amino-3-carboxypropyl]pseudouridine in rRNA + S-methyl-5'-thioadenosine + H(+). Its function is as follows. Aminocarboxypropyltransferase that catalyzes the aminocarboxypropyl transfer on pseudouridine corresponding to position 914 in M.jannaschii 16S rRNA. It constitutes the last step in biosynthesis of the hypermodified N1-methyl-N3-(3-amino-3-carboxypropyl) pseudouridine (m1acp3-Psi). The sequence is that of 16S rRNA aminocarboxypropyltransferase from Halobacterium salinarum (strain ATCC 700922 / JCM 11081 / NRC-1) (Halobacterium halobium).